The sequence spans 319 residues: Bidirectional sugar transporter SWEET15 (319 aa).

Topologically, residues 1–10 (MAFMSMERST) are extracellular. Residues 11 to 31 (WAFTFGILGNLISLMVFLSPL) form a helical membrane-spanning segment. The MtN3/slv 1 domain maps to 13-99 (FTFGILGNLI…AMYLAYAPKS (87 aa)). Over 32–50 (PTFYRVYRKKSTEGFQSTP) the chain is Cytoplasmic. Residues 51–71 (YVVTLFSCMLWMYYAFVKSGA) traverse the membrane as a helical segment. A topological domain (extracellular) is located at residue E72. Residues 73-93 (LLVTINGVGCVIETVYLAMYL) form a helical membrane-spanning segment. At 94 to 106 (AYAPKSARMLTAK) the chain is on the cytoplasmic side. The chain crosses the membrane as a helical span at residues 107–127 (MLLGLNIGLFGVIALVTLLLS). Over 128 to 134 (RGELRVH) the chain is Extracellular. A helical membrane pass occupies residues 135 to 155 (VLGWICVAVSLSVFAAPLSII). The MtN3/slv 2 domain occupies 135-219 (VLGWICVAVS…ALYMAYRSKK (85 aa)). Residues 156 to 167 (RLVIRTKSVEFM) are Cytoplasmic-facing. The helical transmembrane segment at 168-188 (PFSLSFFLVLSAVIWFLYGLL) threads the bilayer. Residues 189–191 (KKD) lie on the Extracellular side of the membrane. The helical transmembrane segment at 192 to 212 (VFVALPNVLGFVFGVAQMALY) threads the bilayer. Over 213–319 (MAYRSKKPLV…KPDMAIVVEV (107 aa)) the chain is Cytoplasmic.

This sequence belongs to the SWEET sugar transporter family. As to quaternary structure, forms homooligomers and/or heterooligomers.

It localises to the cell membrane. Its function is as follows. Mediates both low-affinity uptake and efflux of sugar across the plasma membrane. The chain is Bidirectional sugar transporter SWEET15 (SWEET15) from Oryza sativa subsp. indica (Rice).